A 220-amino-acid chain; its full sequence is Glycerol-3-phosphate acyltransferase (220 aa).

6 helical membrane-spanning segments follow: residues 11 to 31, 70 to 90, 96 to 116, 127 to 147, 153 to 173, and 193 to 213; these read INVI…GYAL, LLIL…SKLF, LQWM…FLNF, GSVV…WFFV, ISSL…FFVP, and MVLI…NLLA.

It belongs to the PlsY family. In terms of assembly, probably interacts with PlsX.

It is found in the cell inner membrane. It carries out the reaction an acyl phosphate + sn-glycerol 3-phosphate = a 1-acyl-sn-glycero-3-phosphate + phosphate. Its pathway is lipid metabolism; phospholipid metabolism. In terms of biological role, catalyzes the transfer of an acyl group from acyl-phosphate (acyl-PO(4)) to glycerol-3-phosphate (G3P) to form lysophosphatidic acid (LPA). This enzyme utilizes acyl-phosphate as fatty acyl donor, but not acyl-CoA or acyl-ACP. The polypeptide is Glycerol-3-phosphate acyltransferase (Helicobacter acinonychis (strain Sheeba)).